A 505-amino-acid polypeptide reads, in one-letter code: Probable alpha-L-arabinofuranosidase C (505 aa).

N-linked (GlcNAc...) asparagine glycans are attached at residues Asn152, Asn181, and Asn269.

This sequence belongs to the glycosyl hydrolase 51 family.

Its subcellular location is the secreted. The catalysed reaction is Hydrolysis of terminal non-reducing alpha-L-arabinofuranoside residues in alpha-L-arabinosides.. It functions in the pathway glycan metabolism; L-arabinan degradation. Its function is as follows. Alpha-L-arabinofuranosidase involved in the degradation of arabinoxylan, a major component of plant hemicellulose. Acts only on small linear 1,5-alpha-linked L-arabinofuranosyl oligosaccharides. The protein is Probable alpha-L-arabinofuranosidase C (abfC) of Aspergillus niger (strain ATCC MYA-4892 / CBS 513.88 / FGSC A1513).